The chain runs to 356 residues: 45 kDa calcium-binding protein (356 aa).

Residues 1–29 form the signal peptide; it reads MMSRQAFLCSLGSLYLSLLFVFLLMDVYA. N33 carries an N-linked (GlcNAc...) asparagine glycan. 5 consecutive EF-hand domains span residues 92 to 127, 131 to 166, 227 to 262, 272 to 307, and 308 to 343; these read KNRK…KTDE, EAVE…SKGL, MLKF…TVEN, WVKD…MNEY, and NALN…FTGS. Ca(2+)-binding residues include D105, D107, D109, K111, E116, D144, D146, D148, H150, E155, D240, D242, D244, K246, E251, D285, N287, D289, E296, D321, N323, N325, H327, and E332.

This sequence belongs to the CREC family.

The protein resides in the golgi apparatus lumen. Functionally, may regulate calcium-dependent activities in the endoplasmic reticulum lumen or post-ER compartment. This Gallus gallus (Chicken) protein is 45 kDa calcium-binding protein (SDF4).